The chain runs to 187 residues: Elongation factor P (187 aa).

It belongs to the elongation factor P family.

The protein localises to the cytoplasm. It participates in protein biosynthesis; polypeptide chain elongation. Its function is as follows. Involved in peptide bond synthesis. Stimulates efficient translation and peptide-bond synthesis on native or reconstituted 70S ribosomes in vitro. Probably functions indirectly by altering the affinity of the ribosome for aminoacyl-tRNA, thus increasing their reactivity as acceptors for peptidyl transferase. The sequence is that of Elongation factor P from Erythrobacter litoralis (strain HTCC2594).